We begin with the raw amino-acid sequence, 741 residues long: Type VI secretion system spike protein VgrG1b (741 aa).

Composition is skewed to polar residues over residues 614–629 and 649–663; these read SIGA…NETI and GNQS…SRSV. The tract at residues 614–678 is disordered; it reads SIGANRSESV…TSVGKDDSLD (65 aa).

This sequence belongs to the VgrG protein family.

The protein resides in the secreted. In terms of biological role, part of the H1 type VI secretion system (H1-T6SS) specialized secretion system, which delivers several virulence factors in both prokaryotic and eukaryotic cells during infection. Allows the delivery of the Tse7 toxin to target cells where it exerts toxicity through its nuclease domain. This Pseudomonas aeruginosa (strain ATCC 15692 / DSM 22644 / CIP 104116 / JCM 14847 / LMG 12228 / 1C / PRS 101 / PAO1) protein is Type VI secretion system spike protein VgrG1b.